We begin with the raw amino-acid sequence, 208 residues long: MADTKKLKGLLLSPVMDNNPIALQILGICSALAVTTKLETAIVMTFAVIFVTAFSNLFISLIRNYIPNSVRIIVQMAIIASLVILVDQILRAYAYGLSKQLSVFVGLIITNCIVMGRAEAFAMKSQPLESFVDGIGNGLGYGAILVSVAFIRELIGSGKLFGMTVFQTIQDGGWYQTNGLFLLAPSAFFIIGFIIWGIRTLKPNQVEK.

5 helical membrane-spanning segments follow: residues 42–62, 70–90, 103–123, 131–151, and 178–198; these read IVMT…ISLI, VRII…DQIL, VFVG…AFAM, FVDG…VAFI, and NGLF…IWGI.

The protein belongs to the NqrDE/RnfAE family. Composed of six subunits; NqrA, NqrB, NqrC, NqrD, NqrE and NqrF.

It is found in the cell inner membrane. It carries out the reaction a ubiquinone + n Na(+)(in) + NADH + H(+) = a ubiquinol + n Na(+)(out) + NAD(+). Its function is as follows. NQR complex catalyzes the reduction of ubiquinone-1 to ubiquinol by two successive reactions, coupled with the transport of Na(+) ions from the cytoplasm to the periplasm. NqrA to NqrE are probably involved in the second step, the conversion of ubisemiquinone to ubiquinol. This is Na(+)-translocating NADH-quinone reductase subunit D from Pasteurella multocida (strain Pm70).